The chain runs to 493 residues: MAKELKELTPRSESYSQWYQDLVIKADLAENSAVRGCMVIKPYGYAIWEKMQRQLDDMFKETGHVNAYFPLFIPKSFLSREAEHVEGFAKECAVVTHYRLKANPDGDGVVVDPQAKLEEELIVRPTSETIIWNTYKNWIQSHRDLPILCNQWANVVRWEMRTRLFLRTAEFLWQEGHTAHATKEEAEEEARRMLEVYATFAEEYMAMPVVKGVKSANERFAGAVDTYTIEALMQDGKALQSGTSHFLGQNFAKAFNVTFADKDGNRDFVWATSWGVSTRLMGALIMSHSDDNGLVLPPKLAPYQVVIVPIYRNEEQLAQIDEKATQIIQALRAKGISVKYDNSDNKKPGWKFAEYELKGVPVRLAMGARDLENNTIEIARRDTLTKETVGLDGIEETVATLLDDIQKNIFQKALNYRKEHTITVDSYEEFKEKIEDGGFILAHWDGTSETEERIKAETKATIRCIPLNGDMTPGKCMVTGKPSPQRVLFARAY.

The protein belongs to the class-II aminoacyl-tRNA synthetase family. ProS type 3 subfamily. Homodimer.

Its subcellular location is the cytoplasm. It catalyses the reaction tRNA(Pro) + L-proline + ATP = L-prolyl-tRNA(Pro) + AMP + diphosphate. In terms of biological role, catalyzes the attachment of proline to tRNA(Pro) in a two-step reaction: proline is first activated by ATP to form Pro-AMP and then transferred to the acceptor end of tRNA(Pro). This is Proline--tRNA ligase from Porphyromonas gingivalis (strain ATCC 33277 / DSM 20709 / CIP 103683 / JCM 12257 / NCTC 11834 / 2561).